The sequence spans 73 residues: Beta-defensin 40 (73 aa).

Residues methionine 1–valine 23 form the signal peptide. Disulfide bonds link cysteine 29–cysteine 58, cysteine 36–cysteine 51, and cysteine 41–cysteine 59.

The protein belongs to the beta-defensin family. In terms of tissue distribution, only expressed in epididymis (corpus, cauda and caput).

It localises to the secreted. Its function is as follows. Has antibacterial activity. The protein is Beta-defensin 40 (Defb40) of Mus musculus (Mouse).